The chain runs to 356 residues: MLYLIAEWLGFEGALNLIRYQTFRTGATLMTALVIGLIIGPRFINMLRVRQGKGQPIRDDGPQSHLAKRGTPTMGGLMIIVSLVLSLVLWMDLRSPFVWACLAVTVGFGLIGFLDDLDKVTKNSHRGVSAKVRLLMEFLVAGIASYIIVSQINTWLYVPFVSDRAIPLGPFYYVFAAVVIVGAGNAVNLTDGLDGLAIMPVIIAAGTFAIIAYLAGRVDYSEYLGIPHVPGAGELAIFCAAIMGAGLAFLWFNAPPAAVFMGDTGSLALGGALGAIAVASHHEIVLAIVGGLFVFEALSVIIQVFWFKRTGKRVFRMAPIHHHFEQLGWSESKVVIRFWIVSIVLALMGLATLKLR.

Transmembrane regions (helical) follow at residues 27–47 (ATLMTALVIGLIIGPRFINML), 73–93 (TMGGLMIIVSLVLSLVLWMDL), 97–117 (FVWACLAVTVGFGLIGFLDDL), 138–158 (FLVAGIASYIIVSQINTWLYV), 165–185 (AIPLGPFYYVFAAVVIVGAGN), 195–215 (GLAIMPVIIAAGTFAIIAYLA), 232–252 (AGELAIFCAAIMGAGLAFLWF), 258–278 (AVFMGDTGSLALGGALGAIAV), 284–304 (IVLAIVGGLFVFEALSVIIQV), and 333–353 (KVVIRFWIVSIVLALMGLATL).

Belongs to the glycosyltransferase 4 family. MraY subfamily. The cofactor is Mg(2+).

It is found in the cell inner membrane. It carries out the reaction UDP-N-acetyl-alpha-D-muramoyl-L-alanyl-gamma-D-glutamyl-meso-2,6-diaminopimeloyl-D-alanyl-D-alanine + di-trans,octa-cis-undecaprenyl phosphate = di-trans,octa-cis-undecaprenyl diphospho-N-acetyl-alpha-D-muramoyl-L-alanyl-D-glutamyl-meso-2,6-diaminopimeloyl-D-alanyl-D-alanine + UMP. It participates in cell wall biogenesis; peptidoglycan biosynthesis. In terms of biological role, catalyzes the initial step of the lipid cycle reactions in the biosynthesis of the cell wall peptidoglycan: transfers peptidoglycan precursor phospho-MurNAc-pentapeptide from UDP-MurNAc-pentapeptide onto the lipid carrier undecaprenyl phosphate, yielding undecaprenyl-pyrophosphoryl-MurNAc-pentapeptide, known as lipid I. The chain is Phospho-N-acetylmuramoyl-pentapeptide-transferase from Erythrobacter litoralis (strain HTCC2594).